An 878-amino-acid chain; its full sequence is Multiple C2 and transmembrane domain-containing protein 2 (878 aa).

Disordered stretches follow at residues 20 to 40 (LINL…DLRV) and 143 to 178 (KPSL…ESTL). A compositionally biased stretch (basic and acidic residues) spans 149–161 (DAPEEHDKTHGND). C2 domains are found at residues 177–292 (TLGE…EHIL), 334–452 (SKSS…CLEL), and 486–607 (PSER…CYVL). Residues Asp-210, Asp-216, Asp-263, Asp-265, and Asp-270 each contribute to the Ca(2+) site. Ca(2+) is bound by residues Asp-525, Asp-531, Asp-577, Asp-579, and Asp-585. The helical transmembrane segment at 694–714 (FVVFLVTVWNFELYMIPLALL) threads the bilayer. Residues 728-752 (KASSTQDSQESTDVEEEGKEEEKES) form a disordered region. The span at 737-746 (ESTDVEEEGK) shows a compositional bias: acidic residues. A helical transmembrane segment spans residues 794–814 (PFLSLLACLILAITTVILYFI).

This sequence belongs to the MCTP family. Ca(2+) is required as a cofactor.

Its subcellular location is the membrane. Its function is as follows. Might play a role in the development of cardiac outflow tract. The sequence is that of Multiple C2 and transmembrane domain-containing protein 2 (Mctp2) from Mus musculus (Mouse).